The chain runs to 228 residues: Urease accessory protein UreF (228 aa).

The protein belongs to the UreF family. UreD, UreF and UreG form a complex that acts as a GTP-hydrolysis-dependent molecular chaperone, activating the urease apoprotein by helping to assemble the nickel containing metallocenter of UreC. The UreE protein probably delivers the nickel.

It is found in the cytoplasm. Its function is as follows. Required for maturation of urease via the functional incorporation of the urease nickel metallocenter. The protein is Urease accessory protein UreF of Lachnoclostridium phytofermentans (strain ATCC 700394 / DSM 18823 / ISDg) (Clostridium phytofermentans).